The primary structure comprises 562 residues: NAD-dependent malic enzyme (562 aa).

The active-site Proton donor is Y101. Position 154 (R154) interacts with NAD(+). Residue K172 is the Proton acceptor of the active site. A divalent metal cation-binding residues include E243, D244, and D267. D267 and N415 together coordinate NAD(+).

This sequence belongs to the malic enzymes family. Homotetramer. Mg(2+) serves as cofactor. Mn(2+) is required as a cofactor.

The enzyme catalyses (S)-malate + NAD(+) = pyruvate + CO2 + NADH. It carries out the reaction oxaloacetate + H(+) = pyruvate + CO2. In Shewanella sp. (strain MR-4), this protein is NAD-dependent malic enzyme.